A 509-amino-acid chain; its full sequence is Putative thymidine phosphorylase (509 aa).

The protein belongs to the thymidine/pyrimidine-nucleoside phosphorylase family. Type 2 subfamily.

The enzyme catalyses thymidine + phosphate = 2-deoxy-alpha-D-ribose 1-phosphate + thymine. This chain is Putative thymidine phosphorylase, found in Bradyrhizobium sp. (strain ORS 278).